The sequence spans 302 residues: Spermidine synthase (302 aa).

M1 is subject to N-acetylmethionine. A PABS domain is found at 18 to 253; sequence EGWFRETCSL…GQIGFMLCSK (236 aa). Q49 is a binding site for S-adenosyl 3-(methylsulfanyl)propylamine. Position 79 (Y79) interacts with putrescine. S-adenosyl 3-(methylsulfanyl)propylamine-binding positions include Q80, D104, E124, 155–156, and D173; that span reads DG. D173 acts as the Proton acceptor in catalysis. Putrescine-binding positions include 173 to 176 and Y241; that span reads DSSD.

Belongs to the spermidine/spermine synthase family. Homodimer or homotetramer.

It carries out the reaction S-adenosyl 3-(methylsulfanyl)propylamine + putrescine = S-methyl-5'-thioadenosine + spermidine + H(+). Its pathway is amine and polyamine biosynthesis; spermidine biosynthesis; spermidine from putrescine: step 1/1. With respect to regulation, the activity is thought to be regulated mainly by the availability of decarboxylated S-adenosylmethionine. Catalyzes the production of spermidine from putrescine and decarboxylated S-adenosylmethionine (dcSAM). Has a strong preference for putrescine as substrate, and has very low activity towards 1,3-diaminopropane. Has extremely low activity towards spermidine. This Mus musculus (Mouse) protein is Spermidine synthase (Srm).